We begin with the raw amino-acid sequence, 68 residues long: MAESEKLDVSKLTDIEIKEKIDVTRRELFDLRFQRATRQLNETHRFKKARVQLAQLLTAQGERSRSNT.

This sequence belongs to the universal ribosomal protein uL29 family.

In Prochlorococcus marinus (strain SARG / CCMP1375 / SS120), this protein is Large ribosomal subunit protein uL29.